A 247-amino-acid polypeptide reads, in one-letter code: ATP synthase subunit a, chloroplastic (247 aa).

5 helical membrane-spanning segments follow: residues 38–58 (QVLI…LIAV), 95–115 (VPFI…GALL), 134–154 (INTT…AGLS), 199–219 (LVVV…VMFL), and 220–240 (GLFT…AYIG).

It belongs to the ATPase A chain family. In terms of assembly, F-type ATPases have 2 components, CF(1) - the catalytic core - and CF(0) - the membrane proton channel. CF(1) has five subunits: alpha(3), beta(3), gamma(1), delta(1), epsilon(1). CF(0) has four main subunits: a, b, b' and c.

It localises to the plastid. Its subcellular location is the chloroplast thylakoid membrane. Its function is as follows. Key component of the proton channel; it plays a direct role in the translocation of protons across the membrane. The polypeptide is ATP synthase subunit a, chloroplastic (Brachypodium distachyon (Purple false brome)).